Here is a 281-residue protein sequence, read N- to C-terminus: Probable feruloyl esterase A (281 aa).

The first 21 residues, 1-21 (MKNFVSMHAILLACSAGAGLA), serve as a signal peptide directing secretion. 3 cysteine pairs are disulfide-bonded: Cys-50–Cys-279, Cys-112–Cys-115, and Cys-248–Cys-255. Position 98 (Asp-98) interacts with substrate. N-linked (GlcNAc...) asparagine glycosylation is present at Asn-100. A substrate-binding site is contributed by Tyr-101. Ser-154 serves as the catalytic Nucleophile. N-linked (GlcNAc...) asparagine glycosylation is present at Asn-173. Asp-215 functions as the Charge relay system in the catalytic mechanism. His-268 is a binding site for substrate. His-268 (charge relay system) is an active-site residue.

This sequence belongs to the AB hydrolase superfamily. FaeA family.

Its subcellular location is the secreted. It catalyses the reaction feruloyl-polysaccharide + H2O = ferulate + polysaccharide.. Involved in degradation of plant cell walls. Hydrolyzes the feruloyl-arabinose ester bond in arabinoxylans, and the feruloyl-galactose ester bond in pectin. This Aspergillus flavus (strain ATCC 200026 / FGSC A1120 / IAM 13836 / NRRL 3357 / JCM 12722 / SRRC 167) protein is Probable feruloyl esterase A (faeA).